The following is an 86-amino-acid chain: Small ribosomal subunit protein uS15 (86 aa).

The interval 1-22 (MSIDTQKVIEDNKRSSADTGSP) is disordered. Residues 7-16 (KVIEDNKRSS) show a composition bias toward basic and acidic residues.

It belongs to the universal ribosomal protein uS15 family. Part of the 30S ribosomal subunit. Forms a bridge to the 50S subunit in the 70S ribosome, contacting the 23S rRNA.

Functionally, one of the primary rRNA binding proteins, it binds directly to 16S rRNA where it helps nucleate assembly of the platform of the 30S subunit by binding and bridging several RNA helices of the 16S rRNA. In terms of biological role, forms an intersubunit bridge (bridge B4) with the 23S rRNA of the 50S subunit in the ribosome. In Stenotrophomonas maltophilia (strain R551-3), this protein is Small ribosomal subunit protein uS15.